Consider the following 1123-residue polypeptide: MAAAVLSGASAGSPAGAPGGPGGLSAVGSGPRLRLLLLESISGLLQPRTASPVAPVHPPIQWAPHLPGLMCLLRLHGTAGGAQNLSALGALVNLSNAHLGSIKTRFEGLCLLSLLIGESPTELFQQHCVSWLRSIQQVLQSQDSPSTMELAVAVLRDLLRHASQLPTLFRDISTNHLPGLLTSLLGLRPECEQSALEGMKACVTYFPRACGSLKGKLASFFLSRLDSLNPQLQQLACECYSRLPSLGAGFSQGLKHTENWEQELHSLLTSLHSLLGSLFEETEPAPVQSEGPGIEMLLSHSEDGNTHVLLQLRQRFSGLARCLGLMLSSEFGAPVSVPVQEILDLICRILGISSKNINLLGDGPLRLLLLPSLHLEALDLLSALILACGSRLLRFGALISRLLPQVLNAWSTGRDTLAPGQERPYSTIRTKVYAILELWVQVCGASAGMLQGGASGEALLTHLLSDISPPADALKLCSTRGSSDGGLQSGKPSAPKKLKLDMGEALAPPSQRKGDRNANSDVCAAALRGLSRTILMCGPLIKEETHRRLHDLVLPLVMSVQQGEVLGSSPYNSSCCRLGLYRLLLALLLAPSPRCPPPLACALKAFSLGQWEDSLEVSSFCSEALVTCAALTHPRVPPLQSSGPACPTPAPVPPPEAPSSFRAPAFHPPGPMPSIGAVPSTGPLPSAGPIPTVGSMASTGQVPSRPGPPATANHLGLSVPGLVSVPPRLLPGPENHRAGSGEDPVLAPSGTPPPSIPPDETFGGRVPRPAFVHYDKEEASDVEISLESDSDDSVVIVPEGLPSLPPAPPSGTPPPAAPAGPPTASPPVPAKEDSEELPATPGPPPPPPPPPPPASGPVTLPPPQLVPEGTPGGGGPTAMEEDLTVININSSDEEEEEEEEEEEEDEDEEEEDFEEEEEDEEEYFEEEEEEEEFEEEFEEEEGELEEEEEEEEEELDEVEDVEFGSAGEVEEGGPPPPTLPPALPPSDSPKVQPEAEPEPGLLLEVEEPGPEEVPGPETAPTLAPEVLPSQEEGEQEVGSPAAGPPQELVEESSAPPALLEEGTEGGGDKVPPPPETPAEEMETEAEVPAPQEKEQDDTAAMLADFIDCPPDDEKPPPATEPDS.

Position 2 is an N-acetylalanine (A2). The tract at residues 2-80 is required for modulation of ESR1 transcriptional activity; it reads AAAVLSGASA…CLLRLHGTAG (79 aa). Phosphoserine is present on S13. Short sequence motifs (LXXLL motif) lie at residues 33 to 37, 69 to 73, 111 to 115, 155 to 159, 177 to 181, 264 to 268, 271 to 275, 365 to 369, and 460 to 464; these read LRLLL, LMCLL, LLSLL, LRDLL, LPGLL, LHSLL, and LTHLL. The required for modulation of ESR1 transcriptional activity stretch occupies residues 121-189; it reads TELFQQHCVS…LLTSLLGLRP (69 aa). A phosphoserine mark is found at S478 and S482. 2 short sequence motifs (LXXLL motif) span residues 580-584 and 585-589; these read LYRLL and LALLL. Disordered stretches follow at residues 639 to 767 and 779 to 1123; these read LQSS…GRVP and ASDV…EPDS. Pro residues predominate over residues 646 to 657; the sequence is CPTPAPVPPPEA. T751 is modified (phosphothreonine). S755 carries the phosphoserine modification. The segment covering 780–792 has biased composition (acidic residues); it reads SDVEISLESDSDD. Composition is skewed to pro residues over residues 803 to 829 and 840 to 865; these read SLPP…PPVP and TPGP…PPQL. A compositionally biased stretch (acidic residues) spans 891 to 962; sequence SDEEEEEEEE…EELDEVEDVE (72 aa). The span at 973–987 shows a compositional bias: pro residues; the sequence is GPPPPTLPPALPPSD. S1029 and S1039 each carry phosphoserine.

It belongs to the RIX1/PELP1 family. As to quaternary structure, interacts with HRS, RXRA, SUMO2, HDAC2, RB1 and STAT3. Interacts with PI3K, SRC and EGFR in cytoplasm. Interacts with ESR1, the interaction is enhanced by 17-beta-estradiol; the interaction increases ESR1 transcriptional activity. Interacts with CREBBP and EP300 in a ligand-dependent manner. Forms two complexes in the presence of 17-beta-estradiol; one with SRC and ESR1 and another with LCK and ESR1. Interacts with histone H1 and H3 with a greater affinity for H1. Component of some MLL1/MLL complex, at least composed of the core components KMT2A/MLL1, ASH2L, HCFC1/HCF1, WDR5 and RBBP5, as well as the facultative components BACC1, CHD8, E2F6, HSP70, INO80C, KANSL1, LAS1L, MAX, MCRS1, MGA, KAT8/MOF, PELP1, PHF20, PRP31, RING2, RUVB1/TIP49A, RUVB2/TIP49B, SENP3, TAF1, TAF4, TAF6, TAF7, TAF9 and TEX10. Core component of the 5FMC complex, at least composed of PELP1, LAS1L, TEX10, WDR18 and SENP3; the complex interacts with methylated CHTOP and ZNF148. Interacts with NOL9. Interacts with BCAS3. Component of the PELP1 complex, composed of at least PELP1, TEX10 and WDR18. The complex interacts (via PELP1) with MDN1 (via its hexameric AAA ATPase ring) and the pre-60S ribosome particles. In terms of processing, transiently sumoylated, preferentially conjugated to SUMO2 or SUMO3. Sumoylation causes nucleolar exclusion of PELP1 and promotes the recruitment of MDN1 to pre-60S particles. Desumoylation by SUMO isopeptidase SENP3 is needed to release both PELP1 and MDN1 from pre-ribosomes. In terms of tissue distribution, widely expressed with high levels in testis, ovary, uterus and pituitary gland.

It localises to the nucleus. The protein localises to the nucleolus. It is found in the nucleoplasm. The protein resides in the cytoplasm. Its function is as follows. Coactivator of estrogen receptor-mediated transcription and a corepressor of other nuclear hormone receptors and sequence-specific transcription factors. Plays a role in estrogen receptor (ER) genomic activity when present in the nuclear compartment by activating the ER target genes in a hormonal stimulation dependent manner. Can facilitate ER non-genomic signaling via SRC and PI3K interaction in the cytosol. Plays a role in E2-mediated cell cycle progression by interacting with RB1. May have important functional implications in ER/growth factor cross-talk. Interacts with several growth factor signaling components including EGFR and HRS. Functions as the key stabilizing component of the Five Friends of Methylated CHTOP (5FMC) complex; the 5FMC complex is recruited to ZNF148 by methylated CHTOP, leading to desumoylation of ZNF148 and subsequent transactivation of ZNF148 target genes. Component of the PELP1 complex involved in the nucleolar steps of 28S rRNA maturation and the subsequent nucleoplasmic transit of the pre-60S ribosomal subunit. Regulates pre-60S association of the critical remodeling factor MDN1. In Mus musculus (Mouse), this protein is Proline-, glutamic acid- and leucine-rich protein 1 (Pelp1).